The primary structure comprises 597 residues: Cytosolic Fe-S cluster assembly factor nar1 (597 aa).

Residue Cys20 participates in [4Fe-4S] cluster binding. Residues 25 to 46 (ESLPQKESQSENPYEVTKEDKV) form a disordered region. 5 residues coordinate [4Fe-4S] cluster: Cys61, Cys64, Cys67, Cys208, and Cys263. The interval 424 to 449 (RLPGAKPQAVSSSANRRQPMSRNAAP) is disordered. The span at 432–444 (AVSSSANRRQPMS) shows a compositional bias: polar residues. The [4Fe-4S] cluster site is built by Cys464 and Cys468.

Belongs to the NARF family.

Its function is as follows. Component of the cytosolic Fe/S protein assembly machinery. Required for maturation of extramitochondrial Fe/S proteins. May play a role in the transfer of pre-assembled Fe/S clusters to target apoproteins. The chain is Cytosolic Fe-S cluster assembly factor nar1 (nar1) from Aspergillus fumigatus (strain ATCC MYA-4609 / CBS 101355 / FGSC A1100 / Af293) (Neosartorya fumigata).